Here is a 186-residue protein sequence, read N- to C-terminus: Ribosome-recycling factor (186 aa).

The protein belongs to the RRF family.

The protein resides in the cytoplasm. Functionally, responsible for the release of ribosomes from messenger RNA at the termination of protein biosynthesis. May increase the efficiency of translation by recycling ribosomes from one round of translation to another. This is Ribosome-recycling factor from Chlorobium limicola (strain DSM 245 / NBRC 103803 / 6330).